The primary structure comprises 182 residues: Sec-independent protein translocase protein TatB (182 aa).

Residues 1–21 (MFDIGFSELLLVFVIGLIVLG) traverse the membrane as a helical segment. 2 disordered regions span residues 87–107 (QAAE…ASDE) and 121–182 (TQHE…SDKP). Residues 168–182 (AAPVVESSPSSSDKP) show a composition bias toward low complexity.

Belongs to the TatB family. In terms of assembly, the Tat system comprises two distinct complexes: a TatABC complex, containing multiple copies of TatA, TatB and TatC subunits, and a separate TatA complex, containing only TatA subunits. Substrates initially bind to the TatABC complex, which probably triggers association of the separate TatA complex to form the active translocon.

The protein resides in the cell inner membrane. Its function is as follows. Part of the twin-arginine translocation (Tat) system that transports large folded proteins containing a characteristic twin-arginine motif in their signal peptide across membranes. Together with TatC, TatB is part of a receptor directly interacting with Tat signal peptides. TatB may form an oligomeric binding site that transiently accommodates folded Tat precursor proteins before their translocation. The chain is Sec-independent protein translocase protein TatB from Salmonella choleraesuis (strain SC-B67).